A 460-amino-acid chain; its full sequence is Chromosomal replication initiator protein DnaA (460 aa).

A domain I, interacts with DnaA modulators region spans residues 1 to 84 (MAVSLWQQCI…RFDIGSRPSA (84 aa)). Residues 84-123 (AKKPEPAPVAAVRVPSPQTKASVGTAFNTTEPVANTNHRS) are domain II. Residues 124 to 340 (NINPTYQFDN…GALNRVIANA (217 aa)) are domain III, AAA+ region. G168, G170, K171, and T172 together coordinate ATP. Residues 341–460 (NFTGRPITID…YANLIRTLSS (120 aa)) form a domain IV, binds dsDNA region.

This sequence belongs to the DnaA family. Oligomerizes as a right-handed, spiral filament on DNA at oriC.

The protein resides in the cytoplasm. Its function is as follows. Plays an essential role in the initiation and regulation of chromosomal replication. ATP-DnaA binds to the origin of replication (oriC) to initiate formation of the DNA replication initiation complex once per cell cycle. Binds the DnaA box (a 9 base pair repeat at the origin) and separates the double-stranded (ds)DNA. Forms a right-handed helical filament on oriC DNA; dsDNA binds to the exterior of the filament while single-stranded (ss)DNA is stabiized in the filament's interior. The ATP-DnaA-oriC complex binds and stabilizes one strand of the AT-rich DNA unwinding element (DUE), permitting loading of DNA polymerase. After initiation quickly degrades to an ADP-DnaA complex that is not apt for DNA replication. Binds acidic phospholipids. The polypeptide is Chromosomal replication initiator protein DnaA (Shewanella oneidensis (strain ATCC 700550 / JCM 31522 / CIP 106686 / LMG 19005 / NCIMB 14063 / MR-1)).